The primary structure comprises 732 residues: Segment polarity protein dishevelled homolog DVL-2 (732 aa).

Residues 1 to 82 enclose the DIX domain; sequence MAETKVIYHL…RVVSWLVSSE (82 aa). 2 disordered regions span residues 81–181 and 195–237; these read SETS…SSST and EEDD…SSFS. The segment covering 98 to 111 has biased composition (pro residues); it reads DPPPVPPPVPPPPA. Residues 146–157 are compositionally biased toward basic and acidic residues; the sequence is MRRDRVRRRDST. Polar residues predominate over residues 202–213; that stretch reads RFSSSTEQSSAS. Basic residues predominate over residues 215-227; sequence LLKRHRRRRKQRP. The 86-residue stretch at 250–335 folds into the PDZ domain; sequence TVTLNMEKYN…KPGPIILTVA (86 aa). Residues 424 to 498 form the DEP domain; the sequence is PESGLEVRDR…SEQCYYIFGD (75 aa). Low complexity-rich tracts occupy residues 570–589, 612–629, and 637–647; these read MGSAGSQHSEGSRSSGSNRS, KSGSGSESEYSTRSSIRR, and PPSERSTSSRP. Residues 570–660 are disordered; it reads MGSAGSQHSE…HPPSVHSYAA (91 aa).

It belongs to the DSH family. Can form homomultimers. Interacts with prickle1. Interacts (via the PDZ domain) with ccdc88c/dal and dact1-B/dpr. Interacts (via the DIX domain) with ARP/Axin-related protein and dact1-A/frodo. Interacts with sdc4, possibly via fz7. Interacts directly (via the DEP domain) with efnb1/ephrin-B1. May interact indirectly with the phosphorylated ephrin receptors ephb1 and ephb2 via SH domain-containing adapters. Phosphorylated. Phosphorylation is controlled by frizzled proteins, correlates with the onset of embryo dorsalizing events and is higher in the dorsal half of early cleavage embryos. Phosphorylated on tyrosine residues in response to association with efnb1/ephrin-B1.

The protein localises to the cytoplasm. The protein resides in the cytoplasmic vesicle. It is found in the cell projection. It localises to the cilium. Its subcellular location is the nucleus. The protein localises to the cell membrane. Its function is as follows. Involved in at least 2 independent signaling cascades, controlling cell fate via canonical Wnt signaling and cell polarity via a planar cell polarity (PCP) cascade. Acts synergistically with dal/dapple-like to activate Wnt signaling, stabilizing ctnnb1/beta-catenin and leading to dorsal axis formation. Also prevents degradation of ctnnb1/beta-catenin by displacing gsk3 from a complex with ARP/Axin-related protein. Has an additional role in anterior-posterior (A/P) axis formation, specifying different neuroectodermal cell fates along the A/P axis in a dose-dependent manner by activating several early patterning genes. In the PCP pathway, required at the cell membrane for PCP-mediated neural and mesodermal convergent extension during gastrulation and subsequent neural tube closure, acting to activate jnk. Also involved in blastopore closure and archenteron elongation during early, but not late, gastrulation. Associates with ephrin receptors and ligands and acts as part of a downstream PCP pathway to mediate ephrin-mediated cell repulsion via activation of rhoa. Required for efnb1/ephrin-B1-driven movement of non-retinal progenitor cells into the retina during eye field formation. Patterns the hindbrain. Required for ciliogenesis. Controls the docking of basal bodies to the apical plasma membrane; mediates the activation, but not localization of rhoa at the apical surface of ciliated cells during basal body docking. Furthermore, required for the association of basal bodies with membrane-bound vesicles and the vesicle-trafficking protein exoc4/sec8, and this association is in turn required for basal body docking. Once basal bodies are docked, required for the planar polarization of basal bodies that underlies ciliary beating and the directional fluid flow across ciliated epithelia. The protein is Segment polarity protein dishevelled homolog DVL-2 of Xenopus tropicalis (Western clawed frog).